We begin with the raw amino-acid sequence, 407 residues long: tRNA pseudouridine synthase Pus10 (407 aa).

Asp-232 functions as the Nucleophile in the catalytic mechanism. Substrate is bound by residues Tyr-300 and Tyr-369.

It belongs to the pseudouridine synthase Pus10 family.

The catalysed reaction is uridine(54) in tRNA = pseudouridine(54) in tRNA. The enzyme catalyses uridine(55) in tRNA = pseudouridine(55) in tRNA. Its function is as follows. Responsible for synthesis of pseudouridine from uracil-54 and uracil-55 in the psi GC loop of transfer RNAs. This chain is tRNA pseudouridine synthase Pus10, found in Methanosphaera stadtmanae (strain ATCC 43021 / DSM 3091 / JCM 11832 / MCB-3).